Consider the following 95-residue polypeptide: Small ribosomal subunit protein bS6 (95 aa).

The protein belongs to the bacterial ribosomal protein bS6 family.

Binds together with bS18 to 16S ribosomal RNA. The polypeptide is Small ribosomal subunit protein bS6 (Bacillus velezensis (strain DSM 23117 / BGSC 10A6 / LMG 26770 / FZB42) (Bacillus amyloliquefaciens subsp. plantarum)).